Consider the following 110-residue polypeptide: Progonadoliberin-2 (110 aa).

The N-terminal stretch at 1–26 (MASIGQGLVLLLLLLLLTAQPGPLKA) is a signal peptide. The interval 25 to 85 (KAQHWSHGWY…KALAPPEDTV (61 aa)) is disordered. The residue at position 36 (glycine 36) is a Glycine amide.

The protein belongs to the GnRH family. In terms of tissue distribution, midbrain.

It localises to the secreted. Its function is as follows. Stimulates the secretion of gonadotropins; it stimulates the secretion of both luteinizing and follicle-stimulating hormones. This Suncus murinus (Asian house shrew) protein is Progonadoliberin-2 (GNRH2).